We begin with the raw amino-acid sequence, 105 residues long: Large ribosomal subunit protein uL24 (105 aa).

The interval 75-105 (DSDGNPTRVGYRTDEESGKRVRISRKNGKDI) is disordered. The segment covering 94–105 (RVRISRKNGKDI) has biased composition (basic residues).

It belongs to the universal ribosomal protein uL24 family. As to quaternary structure, part of the 50S ribosomal subunit.

In terms of biological role, one of two assembly initiator proteins, it binds directly to the 5'-end of the 23S rRNA, where it nucleates assembly of the 50S subunit. Functionally, one of the proteins that surrounds the polypeptide exit tunnel on the outside of the subunit. In Rhodococcus jostii (strain RHA1), this protein is Large ribosomal subunit protein uL24.